Consider the following 274-residue polypeptide: Glutamate racemase (274 aa).

Residues 9-10 and 41-42 contribute to the substrate site; these read DS and YG. The active-site Proton donor/acceptor is the cysteine 73. 74-75 is a binding site for substrate; sequence NT. Residue cysteine 183 is the Proton donor/acceptor of the active site. 184–185 serves as a coordination point for substrate; it reads TH.

It belongs to the aspartate/glutamate racemases family.

The enzyme catalyses L-glutamate = D-glutamate. The protein operates within cell wall biogenesis; peptidoglycan biosynthesis. Functionally, provides the (R)-glutamate required for cell wall biosynthesis. In Shewanella baltica (strain OS155 / ATCC BAA-1091), this protein is Glutamate racemase.